The sequence spans 146 residues: Catabolic 3-dehydroquinase (146 aa).

Catalysis depends on Tyr-24, which acts as the Proton acceptor. Asn-78, His-84, and Asp-91 together coordinate substrate. His-104 acts as the Proton donor in catalysis. Residues 105 to 106 and Arg-115 each bind substrate; that span reads IT.

It belongs to the type-II 3-dehydroquinase family. As to quaternary structure, homododecamer. Adopts a ring-like structure, composed of an arrangement of two hexameric rings stacked on top of one another.

The enzyme catalyses 3-dehydroquinate = 3-dehydroshikimate + H2O. The protein operates within aromatic compound metabolism; 3,4-dihydroxybenzoate biosynthesis; 3,4-dihydroxybenzoate from 3-dehydroquinate: step 1/2. Functionally, is involved in the catabolism of quinate. Allows the utilization of quinate as carbon source via the beta-ketoadipate pathway. The chain is Catabolic 3-dehydroquinase from Candida dubliniensis (strain CD36 / ATCC MYA-646 / CBS 7987 / NCPF 3949 / NRRL Y-17841) (Yeast).